Consider the following 263-residue polypeptide: MVTMRDLLECGVHFGHQTRRWNPKMKRFIFGERKGIYIIDLQKTIRYFRYTYNIVRDAAAEGKTILFVGTKKQAVEAIKEYAEKCGMPYVNHRWLGGMMTNFGTIRQSIRKLEVIETMEEDGSINLLTKKEALMLRRKKEKLIATLGGIRNMKNLPDMVFIVDTVKEKIAVQEANRLKMPVVAPIDTNCDPDVVDYPIPGNDDAIRSVQLFCQEMAEAINEGKSLLEQDSDANADEAEVSQEEKDAVVAEAMSEEDFASEDDE.

The disordered stretch occupies residues 223-246 (KSLLEQDSDANADEAEVSQEEKDA). A compositionally biased stretch (acidic residues) spans 228–240 (QDSDANADEAEVS).

It belongs to the universal ribosomal protein uS2 family.

The polypeptide is Small ribosomal subunit protein uS2 (Campylobacter curvus (strain 525.92)).